We begin with the raw amino-acid sequence, 1328 residues long: Protein turtle homolog B (1328 aa).

An N-terminal signal peptide occupies residues 1–17; the sequence is MIWYVATLIASVISTRG. The Extracellular segment spans residues 18–722; that stretch reads LVAQGAHGLR…DLTDDGLARP (705 aa). Ig-like domains lie at 30–115, 139–226, 228–320, 324–415, and 420–504; these read PEFV…ECKV, PTFT…LLVQ, PPFI…AYLT, PARV…ARLV, and PYFT…THLT. 2 disulfide bridges follow: Cys45–Cys113 and Cys161–Cys208. 2 N-linked (GlcNAc...) asparagine glycosylation sites follow: Asn241 and Asn258. 3 disulfide bridges follow: Cys250–Cys303, Cys346–Cys397, and Cys442–Cys488. Fibronectin type-III domains are found at residues 512–604 and 614–708; these read APGS…TLAF and LVTP…STDI. A glycan (N-linked (GlcNAc...) asparagine) is linked at Asn624. The chain crosses the membrane as a helical span at residues 723–743; it reads VLAGIVATICFLAAAILFSTL. At 744–1328 the chain is on the cytoplasmic side; it reads AACFVNKQRK…EPPTTLPTSG (585 aa). Disordered regions lie at residues 758-817, 914-1040, and 1106-1328; these read RKKD…EKEL, PMSS…PEPW, and KSPG…PTSG. Residues Ser775, Ser783, and Ser794 each carry the phosphoserine modification. Low complexity predominate over residues 990–1001; sequence SPLSSVMSSPPL. Composition is skewed to polar residues over residues 1018 to 1033, 1129 to 1141, and 1199 to 1214; these read ENAS…TPTG, LVSQ…TSQG, and SRLS…SRTG. Arg1136 is modified (omega-N-methylarginine). Ser1207 and Ser1215 each carry phosphoserine. Residues 1246 to 1273 show a composition bias toward low complexity; the sequence is SFSRKSTPSSTGSPSQSSRSGSPSYRPT. Composition is skewed to pro residues over residues 1284-1295 and 1318-1328; these read PSPPPGPAPPAP and PEPPTTLPTSG.

It belongs to the immunoglobulin superfamily. Turtle family. As to quaternary structure, found in a complex with MAGI2 and NLGN2, where it interacts with MAGI2 (via PDZ 5 and PDZ 6 domains). In terms of processing, N-glycosylated and sialylated. Not significantly O-glycosylated. Detected in brain.

It is found in the cell membrane. The protein localises to the postsynaptic cell membrane. The protein resides in the postsynaptic density. Transmembrane protein which is abundantly expressed in interneurons, where it may regulate inhibitory synapse development. May mediate homophilic cell adhesion. The polypeptide is Protein turtle homolog B (Mus musculus (Mouse)).